The sequence spans 602 residues: MILKLVHCLVALTGLIFAKPYQQQQAVLAPSQDVPLRDIHIGDINFIHTTDTHGWLGSHLSQNDYDADWGDFVAFVDILREKILRQSRDVIVIDTGDKRDGNGLSDATWPPGLRSSEIFNMMDYDLLTLGNHELYTAESAILEYRGTSQSSKFKDKYVCSNVEFIEDDGTRVPFGNKYITFETPIMKQRVLALSFLFSFQRANNRAIVTPPLEEITQKSWFQNMVETNREEEIDLIIVFGHLPATDPTEREMHKIHALIRKYYPNTVIQYFGGHTHIRDFVQLDSKSTCLQSGRFAETVGFLSINMTDPVDAESPIFSRRYIDFNKEAFKYHLSKLGHDSNVPVSTKKGKTISRLVNDLRHELNLNEKLGYIPQTYYVSTRPLNSEENLYHLITHKILPNLIPPKNYEPSMSRFILINTGSVRYDLYKGPFTKDTEYIVMPFNNDWRFITVPLVVASRVETYLNKGPVIASLGIPSSSHHKQHFGGFQKCPFINNPNLSEGYTTEDDFGCHGDDTPHNSQREYDIPNVVQCKEVKKVQEEEADPSKMVHVIFYSFMELDILNAVNSIINDLGLRMENLTTNDCSHYGGDSTKKLLRDYFSQF.

N-linked (GlcNAc...) asparagine glycosylation is found at N305, N497, and N577.

Post-translationally, N-glycosylated.

It localises to the vacuole. This is an uncharacterized protein from Saccharomyces cerevisiae (strain ATCC 204508 / S288c) (Baker's yeast).